Consider the following 119-residue polypeptide: Large ribosomal subunit protein uL24 (119 aa).

The protein belongs to the universal ribosomal protein uL24 family. As to quaternary structure, part of the 50S ribosomal subunit.

Its function is as follows. One of two assembly initiator proteins, it binds directly to the 5'-end of the 23S rRNA, where it nucleates assembly of the 50S subunit. Functionally, one of the proteins that surrounds the polypeptide exit tunnel on the outside of the subunit. The polypeptide is Large ribosomal subunit protein uL24 (Sulfurihydrogenibium sp. (strain YO3AOP1)).